Reading from the N-terminus, the 347-residue chain is Farnesyl pyrophosphate synthase (347 aa).

Residues Lys-50, Arg-53, and Gln-88 each contribute to the isopentenyl diphosphate site. The Mg(2+) site is built by Asp-95 and Asp-99. Dimethylallyl diphosphate is bound at residue Arg-104. Arg-105 provides a ligand contact to isopentenyl diphosphate. Lys-192, Thr-193, Gln-232, Lys-249, and Lys-258 together coordinate dimethylallyl diphosphate.

This sequence belongs to the FPP/GGPP synthase family. Interacts with spo9. Mg(2+) is required as a cofactor.

The protein resides in the cytoplasm. It localises to the nucleus. The enzyme catalyses isopentenyl diphosphate + dimethylallyl diphosphate = (2E)-geranyl diphosphate + diphosphate. It carries out the reaction isopentenyl diphosphate + (2E)-geranyl diphosphate = (2E,6E)-farnesyl diphosphate + diphosphate. Its pathway is isoprenoid biosynthesis; farnesyl diphosphate biosynthesis; farnesyl diphosphate from geranyl diphosphate and isopentenyl diphosphate: step 1/1. It functions in the pathway isoprenoid biosynthesis; geranyl diphosphate biosynthesis; geranyl diphosphate from dimethylallyl diphosphate and isopentenyl diphosphate: step 1/1. Functionally, farnesyl pyrophosphate synthase; part of the second module of ergosterol biosynthesis pathway that includes the middle steps of the pathway. Fps1 catalyzes the sequential condensation of isopentenyl pyrophosphate with dimethylallyl pyrophosphate, and then with the resultant geranylpyrophosphate to the ultimate product farnesyl pyrophosphate. The second module is carried out in the vacuole and involves the formation of farnesyl diphosphate, which is also an important intermediate in the biosynthesis of ubiquinone, dolichol, heme and prenylated proteins. Activity by the mevalonate kinase erg12 first converts mevalonate into 5-phosphomevalonate. 5-phosphomevalonate is then further converted to 5-diphosphomevalonate by the phosphomevalonate kinase erg8. The diphosphomevalonate decarboxylase mvd1 then produces isopentenyl diphosphate. The isopentenyl-diphosphate delta-isomerase idi1 then catalyzes the 1,3-allylic rearrangement of the homoallylic substrate isopentenyl (IPP) to its highly electrophilic allylic isomer, dimethylallyl diphosphate (DMAPP). Finally the farnesyl diphosphate synthase fps1 catalyzes the sequential condensation of isopentenyl pyrophosphate with dimethylallyl pyrophosphate, and then with the resultant geranylpyrophosphate to the ultimate product farnesyl pyrophosphate. The polypeptide is Farnesyl pyrophosphate synthase (Schizosaccharomyces pombe (strain 972 / ATCC 24843) (Fission yeast)).